We begin with the raw amino-acid sequence, 376 residues long: Succinyl-diaminopimelate desuccinylase (376 aa).

His67 contributes to the Zn(2+) binding site. The active site involves Asp69. Residue Asp100 participates in Zn(2+) binding. The active-site Proton acceptor is the Glu134. Positions 135, 163, and 349 each coordinate Zn(2+).

Belongs to the peptidase M20A family. DapE subfamily. Homodimer. Requires Zn(2+) as cofactor. The cofactor is Co(2+).

The enzyme catalyses N-succinyl-(2S,6S)-2,6-diaminopimelate + H2O = (2S,6S)-2,6-diaminopimelate + succinate. It functions in the pathway amino-acid biosynthesis; L-lysine biosynthesis via DAP pathway; LL-2,6-diaminopimelate from (S)-tetrahydrodipicolinate (succinylase route): step 3/3. In terms of biological role, catalyzes the hydrolysis of N-succinyl-L,L-diaminopimelic acid (SDAP), forming succinate and LL-2,6-diaminopimelate (DAP), an intermediate involved in the bacterial biosynthesis of lysine and meso-diaminopimelic acid, an essential component of bacterial cell walls. The polypeptide is Succinyl-diaminopimelate desuccinylase (Idiomarina loihiensis (strain ATCC BAA-735 / DSM 15497 / L2-TR)).